A 554-amino-acid polypeptide reads, in one-letter code: Condensin-2 complex subunit H2 (554 aa).

Ser45, Ser178, Ser182, Ser199, and Ser200 each carry phosphoserine. Positions Pro154–Thr296 are disordered. Polar residues predominate over residues Arg179 to Gln191. Over residues Gly201 to Glu210 the composition is skewed to acidic residues. At Ser441 the chain carries Phosphoserine.

Belongs to the CND2 H2 (condensin-2 subunit 2) family. Component of the condensin-2 complex, which contains the SMC2 and SMC4 heterodimer, and three non SMC subunits, NCAPG2, NCAPH2 and NCAPD3 that probably regulate the complex.

It localises to the nucleus. Regulatory subunit of the condensin-2 complex, a complex that seems to provide chromosomes with an additional level of organization and rigidity and in establishing mitotic chromosome architecture. May promote the resolution of double-strand DNA catenanes (intertwines) between sister chromatids. Condensin-mediated compaction likely increases tension in catenated sister chromatids, providing directionality for type II topoisomerase-mediated strand exchanges toward chromatid decatenation. Required for decatenation of chromatin bridges at anaphase. Early in neurogenesis, may play an essential role to ensure accurate mitotic chromosome condensation in neuron stem cells, ultimately affecting neuron pool and cortex size. Seems to have lineage-specific role in T-cell development. The chain is Condensin-2 complex subunit H2 (Ncaph2) from Rattus norvegicus (Rat).